The following is a 335-amino-acid chain: Nucleoid-associated protein KPN78578_25800 (335 aa).

It belongs to the YejK family.

Its subcellular location is the cytoplasm. The protein localises to the nucleoid. In Klebsiella pneumoniae subsp. pneumoniae (strain ATCC 700721 / MGH 78578), this protein is Nucleoid-associated protein KPN78578_25800.